The following is a 148-amino-acid chain: Single-stranded DNA-binding protein 1-B, mitochondrial (148 aa).

A mitochondrion-targeting transit peptide spans 1–17 (MFHRPVLQVFRQFARCQ). The region spanning 30–142 (MNKVQLLGRV…IIADNIIFLT (113 aa)) is the SSB domain.

In terms of assembly, homotetramer.

Its subcellular location is the mitochondrion. The protein resides in the mitochondrion matrix. It localises to the mitochondrion nucleoid. In terms of biological role, binds preferentially and cooperatively to pyrimidine rich single-stranded DNA (ss-DNA). Required to maintain the copy number of mitochondrial DNA (mtDNA) and plays crucial roles during mtDNA replication that stimulate activity of the DNA polymerase at the replication fork. May also function in mtDNA repair. This is Single-stranded DNA-binding protein 1-B, mitochondrial (ssbp1-b) from Xenopus laevis (African clawed frog).